A 551-amino-acid chain; its full sequence is GMP synthase [glutamine-hydrolyzing] (551 aa).

Residues 40–233 (KILIVDFGSQ…VRKIAGLTGD (194 aa)) form the Glutamine amidotransferase type-1 domain. C117 functions as the Nucleophile in the catalytic mechanism. Catalysis depends on residues H207 and E209. The region spanning 234–426 (WTMRAFREEE…LGLPEIFVGR (193 aa)) is the GMPS ATP-PPase domain. 261–267 (SGGVDSA) is a binding site for ATP.

In terms of assembly, homodimer.

The catalysed reaction is XMP + L-glutamine + ATP + H2O = GMP + L-glutamate + AMP + diphosphate + 2 H(+). Its pathway is purine metabolism; GMP biosynthesis; GMP from XMP (L-Gln route): step 1/1. Catalyzes the synthesis of GMP from XMP. The chain is GMP synthase [glutamine-hydrolyzing] from Bradyrhizobium diazoefficiens (strain JCM 10833 / BCRC 13528 / IAM 13628 / NBRC 14792 / USDA 110).